The chain runs to 379 residues: Queuine tRNA-ribosyltransferase (379 aa).

Catalysis depends on Asp-94, which acts as the Proton acceptor. Residues Asp-94–Phe-98, Asp-148, Gln-191, and Gly-218 each bind substrate. Positions Gly-249–Ser-255 are RNA binding. Catalysis depends on Asp-268, which acts as the Nucleophile. The tract at residues Thr-273–Arg-277 is RNA binding; important for wobble base 34 recognition. Residues Cys-306, Cys-308, Cys-311, and His-337 each contribute to the Zn(2+) site.

This sequence belongs to the queuine tRNA-ribosyltransferase family. As to quaternary structure, homodimer. Within each dimer, one monomer is responsible for RNA recognition and catalysis, while the other monomer binds to the replacement base PreQ1. Zn(2+) serves as cofactor.

The catalysed reaction is 7-aminomethyl-7-carbaguanine + guanosine(34) in tRNA = 7-aminomethyl-7-carbaguanosine(34) in tRNA + guanine. The protein operates within tRNA modification; tRNA-queuosine biosynthesis. Catalyzes the base-exchange of a guanine (G) residue with the queuine precursor 7-aminomethyl-7-deazaguanine (PreQ1) at position 34 (anticodon wobble position) in tRNAs with GU(N) anticodons (tRNA-Asp, -Asn, -His and -Tyr). Catalysis occurs through a double-displacement mechanism. The nucleophile active site attacks the C1' of nucleotide 34 to detach the guanine base from the RNA, forming a covalent enzyme-RNA intermediate. The proton acceptor active site deprotonates the incoming PreQ1, allowing a nucleophilic attack on the C1' of the ribose to form the product. After dissociation, two additional enzymatic reactions on the tRNA convert PreQ1 to queuine (Q), resulting in the hypermodified nucleoside queuosine (7-(((4,5-cis-dihydroxy-2-cyclopenten-1-yl)amino)methyl)-7-deazaguanosine). The chain is Queuine tRNA-ribosyltransferase from Bacillus cytotoxicus (strain DSM 22905 / CIP 110041 / 391-98 / NVH 391-98).